A 200-amino-acid polypeptide reads, in one-letter code: Cytochrome c biogenesis ATP-binding export protein CcmA (200 aa).

The ABC transporter domain occupies 2–200; it reads LDVIELDFDY…NKADYEEYHL (199 aa). Residue 34–41 coordinates ATP; it reads GSNGAGKT.

This sequence belongs to the ABC transporter superfamily. CcmA exporter (TC 3.A.1.107) family. The complex is composed of two ATP-binding proteins (CcmA) and two transmembrane proteins (CcmB).

Its subcellular location is the cell inner membrane. It catalyses the reaction heme b(in) + ATP + H2O = heme b(out) + ADP + phosphate + H(+). Its function is as follows. Part of the ABC transporter complex CcmAB involved in the biogenesis of c-type cytochromes; once thought to export heme, this seems not to be the case, but its exact role is uncertain. Responsible for energy coupling to the transport system. This Legionella pneumophila protein is Cytochrome c biogenesis ATP-binding export protein CcmA.